The chain runs to 484 residues: uncharacterized protein (484 aa).

A run of 12 helical transmembrane segments spans residues Leu19–Val39, Val78–Val98, Phe111–Leu131, Ile134–Leu154, Phe165–Ile185, Ile199–Gly219, Thr249–Phe269, Ile289–Leu309, Ile321–Leu341, Leu360–Leu380, Phe398–Leu418, and Leu440–Leu460.

Its subcellular location is the cell membrane. This is an uncharacterized protein from Mesomycoplasma hyopneumoniae (strain 232) (Mycoplasma hyopneumoniae).